Reading from the N-terminus, the 174-residue chain is Repair DNA polymerase X (174 aa).

Residues 42 to 51 form an involved in ssDNA binding region; that stretch reads REEKMLNDVD. Mg(2+)-binding residues include Asp49 and Asp51. An intrachain disulfide couples Cys81 to Cys86. Asp100 lines the Mg(2+) pocket.

Belongs to the DNA polymerase type-X family. The cofactor is Mg(2+).

The protein localises to the virion. It catalyses the reaction DNA(n) + a 2'-deoxyribonucleoside 5'-triphosphate = DNA(n+1) + diphosphate. Its function is as follows. Error-prone polymerase lacking a proofreading 3'-5' exonuclease which catalyzes the gap-filling reaction during the DNA repair process. Specifically binds intermediates in the single-nucleotide base-excision repair process. Also catalyzes DNA polymerization with low nucleotide-insertion fidelity. Probably acts as a strategic DNA mutase, which gives rise to a rapid emergence of variants. Generates mismatched G-G pairs, in that case, the polymerase first binds the deoxynucleotide followed by mismatch formation. Together with the viral DNA ligase, fills the single nucleotide gaps generated by the AP endonuclease. Binds DNA with high affinity via the helix alphaE. The chain is Repair DNA polymerase X from Ornithodoros (relapsing fever ticks).